The primary structure comprises 960 residues: FYVE, RhoGEF and PH domain-containing protein 1 (960 aa).

Disordered regions lie at residues 1–210 (MHGH…SSAA) and 226–355 (ASDR…REIP). The residue at position 48 (Ser-48) is a Phosphoserine. The segment covering 125–135 (PHPEGPQRLRS) has biased composition (basic and acidic residues). Pro residues-rich tracts occupy residues 137–149 (PGPP…PRPS), 156–165 (GPKPQVPPKP), and 173–190 (VLPP…PLPA). The SH3-binding signature appears at 171–187 (PRVLPPPEPIPPPPSRP). Ser-205 bears the Phosphoserine mark. The segment covering 231–251 (APGPCPVPPEPAMLPQPPPQP) has biased composition (pro residues). Positions 273 to 284 (RDGEKVPNRDSG) are enriched in basic and acidic residues. Residues 285-294 (IDSISSPSNS) are compositionally biased toward low complexity. Positions 335 to 350 (VDSDLEEEEEEEEEEK) are enriched in acidic residues. The 189-residue stretch at 372–560 (KVFHIANELL…ATAAEHSNAA (189 aa)) folds into the DH domain. The 100-residue stretch at 589–688 (ELIKEGHILK…WVQAINSTLL (100 aa)) folds into the PH 1 domain. The segment at 701–725 (NSTNRDDEDTPPNSPNVDLGKRAPT) is disordered. At Thr-710 the chain carries Phosphothreonine. Ser-714 is modified (phosphoserine). The FYVE-type zinc finger occupies 729–789 (EKEVTMCMRC…VCTDCYVALH (61 aa)). Zn(2+) contacts are provided by Cys-735, Cys-738, Cys-752, Cys-755, Cys-760, Cys-763, Cys-781, and Cys-784. Residues 820–920 (NSVICSFLHY…WMAVLGRAGR (101 aa)) form the PH 2 domain. Residues 922 to 960 (DTFCPGPTLSEDKEMEETPVAASGATAEPPEASQTRDKT) are disordered.

As to quaternary structure, interacts with DBNL/ABP1 and CTTN. Binds CDC42. May interact with CCPG1.

Its subcellular location is the cytoplasm. It localises to the cell projection. It is found in the lamellipodium. The protein localises to the ruffle. The protein resides in the cytoskeleton. In terms of biological role, activates CDC42, a member of the Ras-like family of Rho- and Rac proteins, by exchanging bound GDP for free GTP. Plays a role in regulating the actin cytoskeleton and cell shape. This chain is FYVE, RhoGEF and PH domain-containing protein 1 (Fgd1), found in Mus musculus (Mouse).